The chain runs to 497 residues: Gasdermin-E (497 aa).

Positions 1–56 are membrane targeting domain; sequence MFAKATRSFLREVDAEGDLIAVSNLNDSDKSQLLSLVTKKKRFWCWQRPKYQFLSV. Position 45 is an S-(2-succinyl)cysteine (Cys45). Lys120 participates in a covalent cross-link: Glycyl lysine isopeptide (Lys-Gly) (interchain with G-Cter in ubiquitin). An S-(2-succinyl)cysteine mark is found at Cys156, Cys168, and Cys180. Residue Lys189 forms a Glycyl lysine isopeptide (Lys-Gly) (interchain with G-Cter in ubiquitin) linkage. Residues Cys235, Cys371, Cys409, Cys418, and Cys491 each carry the S-(2-succinyl)cysteine modification.

This sequence belongs to the gasdermin family. In terms of assembly, homooligomer; homooligomeric ring-shaped pore complex containing 27-28 subunits when inserted in the membrane. Cleavage at Asp-270 by CASP3 (mature and uncleaved precursor forms) or granzyme B (GZMB) relieves autoinhibition and is sufficient to initiate pyroptosis. Post-translationally, succination by the Krebs cycle intermediate fumarate, which leads to S-(2-succinyl)cysteine residues, inhibits processing by caspases, and ability to initiate pyroptosis. Succination modification is catalyzed by a non-enzymatic reaction caused by an accumulation of fumarate. In terms of processing, ubiquitinated on Lys-120 and Lys-189 via 'Lys-48'-linked polyubiquitin chains, leading to proteasomal degradation. Deubiquitinated by USP48, leading to increased stability. Palmitoylated.

Its subcellular location is the cell membrane. The protein resides in the cytoplasm. It is found in the cytosol. Its activity is regulated as follows. The full-length protein before cleavage is inactive: intramolecular interactions between N- and C-terminal domains mediate autoinhibition in the absence of activation signal. The intrinsic pyroptosis-inducing activity is carried by the released N-terminal moiety (Gasdermin-E, N-terminal) following cleavage by CASP3 or granzyme B (GZMB). Activated by NLRP1 in the absence of GSDMD expression: NLRP1 cleaves and activates CASP8, promoting downstream activation of CASP3 and subsequent activation of GSDME. Functionally, precursor of a pore-forming protein that converts non-inflammatory apoptosis to pyroptosis. This form constitutes the precursor of the pore-forming protein: upon cleavage, the released N-terminal moiety (Gasdermin-E, N-terminal) binds to membranes and forms pores, triggering pyroptosis. Pore-forming protein produced by cleavage by CASP3 or granzyme B (GZMB), which converts non-inflammatory apoptosis to pyroptosis or promotes granzyme-mediated pyroptosis, respectively. After cleavage, moves to the plasma membrane, homooligomerizes within the membrane and forms pores of 10-15 nanometers (nm) of inner diameter, allowing the release of mature interleukins (IL1B and IL16) and triggering pyroptosis. Binds to inner leaflet lipids, bisphosphorylated phosphatidylinositols, such as phosphatidylinositol (4,5)-bisphosphate. Cleavage by CASP3 switches CASP3-mediated apoptosis induced by TNF or danger signals, such as chemotherapy drugs, to pyroptosis. Mediates secondary necrosis downstream of the mitochondrial apoptotic pathway and CASP3 activation as well as in response to viral agents. Exhibits bactericidal activity. Cleavage by GZMB promotes tumor suppressor activity by triggering robust anti-tumor immunity. Suppresses tumors by mediating granzyme-mediated pyroptosis in target cells of natural killer (NK) cells: cleavage by granzyme B (GZMB), delivered to target cells from NK-cells, triggers pyroptosis of tumor cells and tumor suppression. May play a role in the p53/TP53-regulated cellular response to DNA damage. In Equus caballus (Horse), this protein is Gasdermin-E.